The sequence spans 278 residues: Shikimate dehydrogenase (NADP(+)) (278 aa).

Residues 19–21 (SRS) and Thr66 each bind shikimate. Residue Lys70 is the Proton acceptor of the active site. 2 residues coordinate shikimate: Asn91 and Asp106. Residues 129–133 (GAGGA) and Phe221 contribute to the NADP(+) site. Tyr223 provides a ligand contact to shikimate. Gly242 contributes to the NADP(+) binding site.

This sequence belongs to the shikimate dehydrogenase family. Homodimer.

It carries out the reaction shikimate + NADP(+) = 3-dehydroshikimate + NADPH + H(+). It functions in the pathway metabolic intermediate biosynthesis; chorismate biosynthesis; chorismate from D-erythrose 4-phosphate and phosphoenolpyruvate: step 4/7. Involved in the biosynthesis of the chorismate, which leads to the biosynthesis of aromatic amino acids. Catalyzes the reversible NADPH linked reduction of 3-dehydroshikimate (DHSA) to yield shikimate (SA). In Anaeromyxobacter dehalogenans (strain 2CP-C), this protein is Shikimate dehydrogenase (NADP(+)).